The chain runs to 611 residues: Oxidoreductase cicC (611 aa).

The signal sequence occupies residues 1–20; the sequence is MALRYLNKFSLLSLAVPTLA. FAD-binding positions include 45-46 and 65-66; these read NA and EA. Residues Asn76 and Asn113 are each glycosylated (N-linked (GlcNAc...) asparagine). FAD contacts are provided by residues Val123 and 131–134; that span reads NLMT. 3 N-linked (GlcNAc...) asparagine glycosylation sites follow: Asn282, Asn410, and Asn475. The active-site Proton acceptor is the His547. The active-site Proton donor is His547. Residue Ala581 participates in FAD binding. The Proton acceptor role is filled by His591. 592–593 provides a ligand contact to FAD; it reads PI.

This sequence belongs to the GMC oxidoreductase family. FAD serves as cofactor.

The protein operates within phytotoxin biosynthesis. Functionally, oxidoreductase; part of the gene cluster that mediates the biosynthesis of cichorine, a phytotoxin active against knapweed, corn, and soybeans. The first step in the pathway is performed by the non-reducing polyketide synthase pkbA that condenses one acetyl-CoA starter unit with 3 malonyl-CoA units. PkbA also catalyzes one methylation step to produce 3-methylorsellinate. The nonribosomal peptide synthase-like protein cicB, the cytochrome P450 monooxygenase cicH and the O-methyltransferase cicE are involved in the conversion of 3-methylorsellinate into nidulol. CicB converts 3-methylorsellinate to a yet unidentified intermediate, cicH may play a ring-closing role for cichorine and cicE is plausibly responsible for the methylation of one of the phenol groups. The oxidoreductase cicC acts downstream with still unidentified enzymes to further convert nidulol into cichorine. The polypeptide is Oxidoreductase cicC (Emericella nidulans (strain FGSC A4 / ATCC 38163 / CBS 112.46 / NRRL 194 / M139) (Aspergillus nidulans)).